The chain runs to 202 residues: MCSSKCTRYIGHSLVVFAVLCIVANILLYFPNGETKYAYEDHLSRFVWFFAGIVGGGLLILLPAFVFLGLEGEDCCGCWSCENYGKRCTMLSSIMAALIGIAGSGYCVIVAALGLAEGPKCGDSHGMWNYTFANTDGQYLLDPTTWSKCHEPNNIVEWNVTLFSILLALGGLEFILCLIQVINGVLEGMCSYCCSHQQQYDC.

The Cytoplasmic portion of the chain corresponds to 1 to 9 (MCSSKCTRY). A helical transmembrane segment spans residues 10–30 (IGHSLVVFAVLCIVANILLYF). Residues 31 to 49 (PNGETKYAYEDHLSRFVWF) are Extracellular-facing. The chain crosses the membrane as a helical span at residues 50–70 (FAGIVGGGLLILLPAFVFLGL). Over 71–93 (EGEDCCGCWSCENYGKRCTMLSS) the chain is Cytoplasmic. Residues 94–114 (IMAALIGIAGSGYCVIVAALG) form a helical membrane-spanning segment. Residues 115-161 (LAEGPKCGDSHGMWNYTFANTDGQYLLDPTTWSKCHEPNNIVEWNVT) lie on the Extracellular side of the membrane. 2 N-linked (GlcNAc...) asparagine glycosylation sites follow: asparagine 129 and asparagine 159. Residues 162–182 (LFSILLALGGLEFILCLIQVI) form a helical membrane-spanning segment. Residues 183-202 (NGVLEGMCSYCCSHQQQYDC) lie on the Cytoplasmic side of the membrane.

It belongs to the L6 tetraspanin family. Present in high molecular weight complexes in tumor cells. Interacts with SDCBP2.

It is found in the membrane. In Mesocricetus auratus (Golden hamster), this protein is Transmembrane 4 L6 family member 1 (TM4SF1).